A 331-amino-acid chain; its full sequence is Isopenicillin N synthase (331 aa).

4 residues coordinate isopenicillin N: Arg87, Tyr91, Ser183, and Tyr189. 6 residues coordinate N-[(5S)-5-amino-5-carboxypentanoyl]-L-cysteinyl-D-valine: Arg87, Tyr91, Ser183, Tyr189, His214, and Asp216. The Fe2OG dioxygenase domain maps to 181–288 (LSSVVLIRYP…RQSLPFFVNL (108 aa)). Positions 214, 216, and 270 each coordinate Fe(2+). Residue Arg279 coordinates 2-oxoglutarate. Ser281 provides a ligand contact to isopenicillin N. An N-[(5S)-5-amino-5-carboxypentanoyl]-L-cysteinyl-D-valine-binding site is contributed by Ser281.

Belongs to the iron/ascorbate-dependent oxidoreductase family. It depends on Fe(2+) as a cofactor.

It localises to the cytoplasm. The protein localises to the cytosol. The enzyme catalyses N-[(5S)-5-amino-5-carboxypentanoyl]-L-cysteinyl-D-valine + O2 = isopenicillin N + 2 H2O. It participates in antibiotic biosynthesis; penicillin G biosynthesis; penicillin G from L-alpha-aminoadipate and L-cysteine and L-valine: step 2/3. Its function is as follows. Isopenicillin N synthase; part of the gene cluster that mediates the biosynthesis of penicillin, the world's most important antibiotic. The first step of the pathway is performed by the trimodular NRPS acvA that produces the tripeptide N-[(5S)-5-amino-5-carboxypentanoyl]-L-cysteinyl-D-valine (LLD-ACV or ACV) via condensation of the 3 residues L-2-aminoadipate, L-cysteine and L-valine. The precursor amino acids for penicillin biosynthesis are withdrawn from the vacuolar amino acid pool by the MFS-type transporter penV. Each of the constituent amino acids of the tripeptide acv are activated as aminoacyl-adenylates with peptide bonds formed through the participation of amino acid thioester intermediates. The tripeptide ACV is then cyclized to form isopenicillin N (IPN) by the isopenicillin N synthase ipnA that forms the beta-lactam nucleus. Finally, the alpha-aminoadipyl side chain is exchanged for phenylacetic acid by the isopenicillin N acyltransferase aatA to yield penicillin. This step occurs in the peroxisomal matrix and the penM and paaT transporters are involved in the isopenicillin N and phenylacetic acid import into the peroxisome, respectively. The sequence is that of Isopenicillin N synthase from Penicillium rubens (strain ATCC 28089 / DSM 1075 / NRRL 1951 / Wisconsin 54-1255) (Penicillium chrysogenum).